We begin with the raw amino-acid sequence, 331 residues long: L-lactate dehydrogenase A chain (331 aa).

NAD(+)-binding positions include 29 to 57 and Arg98; that span reads GMVG…MEDK. Positions 105, 137, and 168 each coordinate substrate. Residue Asn137 coordinates NAD(+). The active-site Proton acceptor is the His192. Thr247 serves as a coordination point for substrate.

The protein belongs to the LDH/MDH superfamily. LDH family. Homotetramer.

The protein localises to the cytoplasm. The enzyme catalyses (S)-lactate + NAD(+) = pyruvate + NADH + H(+). The protein operates within fermentation; pyruvate fermentation to lactate; (S)-lactate from pyruvate: step 1/1. Its function is as follows. Interconverts simultaneously and stereospecifically pyruvate and lactate with concomitant interconversion of NADH and NAD(+). The protein is L-lactate dehydrogenase A chain (ldha) of Dissostichus eleginoides (Patagonian toothfish).